Here is a 154-residue protein sequence, read N- to C-terminus: Transcriptional repressor NrdR (154 aa).

A zinc finger spans residues 3–34; the sequence is CPFCRHPDSRVVDSRETDEGQAIRRRRSCPEC. The ATP-cone domain occupies 46-136; it reads LAVVKRSGVT…VYRSFESAAD (91 aa).

This sequence belongs to the NrdR family. It depends on Zn(2+) as a cofactor.

Negatively regulates transcription of bacterial ribonucleotide reductase nrd genes and operons by binding to NrdR-boxes. This is Transcriptional repressor NrdR from Mycobacterium sp. (strain JLS).